We begin with the raw amino-acid sequence, 56 residues long: Small ribosomal subunit protein uS14 (56 aa).

Zn(2+)-binding residues include C21, C24, C39, and C42.

The protein belongs to the universal ribosomal protein uS14 family. In terms of assembly, component of the 40S small ribosomal subunit. The cofactor is Zn(2+).

It localises to the cytoplasm. It is found in the cytosol. The protein resides in the rough endoplasmic reticulum. This is Small ribosomal subunit protein uS14 (RpS29) from Lonomia obliqua (Moth).